A 506-amino-acid chain; its full sequence is Maturase K (506 aa).

This sequence belongs to the intron maturase 2 family. MatK subfamily.

Its subcellular location is the plastid. The protein localises to the chloroplast. Usually encoded in the trnK tRNA gene intron. Probably assists in splicing its own and other chloroplast group II introns. In Trifolium incarnatum (Crimson clover), this protein is Maturase K.